The primary structure comprises 243 residues: CD48 antigen (243 aa).

The first 26 residues, 1-26 (MCSRGWDSCLALELLLLPLSLLVTSI), serve as a signal peptide directing secretion. 2 consecutive Ig-like C2-type domains span residues 29 to 127 (HLVH…KLQV) and 132 to 212 (PKPV…VCLS). N-linked (GlcNAc...) asparagine glycans are attached at residues Asn-40, Asn-44, Asn-104, Asn-162, and Asn-189. A disulfide bond links Cys-154 and Cys-196. Ser-220 carries GPI-anchor amidated serine lipidation. A propeptide spans 221–243 (FGVEWIASWLVVTVPTILGLLLT) (removed in mature form).

In terms of assembly, interacts with CD2. Interacts with CD244; this interaction is possible not only on different cells (trans interaction) but also on the same cell (cis interaction). Interacts with LCK. As to expression, widely expressed on all hematopoietic cells.

The protein resides in the cell membrane. Its subcellular location is the membrane raft. It is found in the secreted. In terms of biological role, glycosylphosphatidylinositol (GPI)-anchored cell surface glycoprotein that interacts via its N-terminal immunoglobulin domain with cell surface receptors including CD244/2B4 or CD2 to regulate immune cell function and activation. Participates in T-cell signaling transduction by associating with CD2 and efficiently bringing the Src family protein kinase LCK and LAT to the TCR/CD3 complex. In turn, promotes LCK phosphorylation and subsequent activation. Induces the phosphorylation of the cytoplasmic immunoreceptortyrosine switch motifs (ITSMs) of CD244 initiating a series of signaling events that leads to the generation of the immunological synapse and the directed release of cytolytic granules containing perforin and granzymes by T-lymphocytes and NK-cells. This chain is CD48 antigen (CD48), found in Homo sapiens (Human).